The following is a 914-amino-acid chain: Neuropilin-1 (914 aa).

Positions 1–18 are cleaved as a signal peptide; sequence MDWGLFLHCAALTFTLSR. The Extracellular segment spans residues 20–847; it reads LRSDKCGDTI…PGNVLKTLDP (828 aa). Intrachain disulfides connect Cys25–Cys52, Cys80–Cys102, and Cys145–Cys171. 2 CUB domains span residues 25–139 and 145–263; these read CGDT…YEVF and CSRN…YSVS. Asn148 carries an N-linked (GlcNAc...) asparagine glycan. Ca(2+) is bound by residues Glu193, Asp207, and Asp248. Cys204 and Cys226 are oxidised to a cystine. N-linked (GlcNAc...) asparagine glycosylation occurs at Asn259. 2 cysteine pairs are disulfide-bonded: Cys273-Cys422 and Cys429-Cys581. F5/8 type C domains lie at 273–422 and 429–581; these read CMEP…VYGC and CSGM…LLGC. Asn520 carries an N-linked (GlcNAc...) asparagine glycan. An O-linked (Xyl...) (chondroitin sulfate) serine; alternate glycan is attached at Ser610. Ser610 carries O-linked (Xyl...) (heparan sulfate) serine; alternate glycosylation. Positions 636-801 constitute an MAM domain; that stretch reads PYNLNCGFGW…NHISQEDCQK (166 aa). The tract at residues 809–829 is disordered; sequence IVEEDPESNQTGFTPSYRTDE. Positions 816 to 825 are enriched in polar residues; sequence SNQTGFTPSY. Asn817 carries an N-linked (GlcNAc...) asparagine glycan. The helical transmembrane segment at 848–870 threads the bilayer; that stretch reads ILITIIAMSALGVLLGAICGVVL. Residues 871–914 are Cytoplasmic-facing; it reads YCACWHNGMSERNLSALENYNFELVDGVKLKKDKLNTQNSYSEA.

It belongs to the neuropilin family. As to quaternary structure, homodimer, and heterodimer. Developing nervous system; optic tectum (layers D and E of SGFS), amacrine cells of retina, neurites of dorsal root ganglia. Also expressed in non-neuronal cells, e.g. blood vessels in the entire embryo.

The protein resides in the mitochondrion membrane. It localises to the cell membrane. In terms of biological role, receptor involved in the development of the cardiovascular system, in angiogenesis, in the formation of certain neuronal circuits and in organogenesis outside the nervous system. Mediates the chemorepulsant activity of semaphorins. Binding to VEGFA initiates a signaling pathway needed for motor neuron axon guidance and cell body migration, including for the caudal migration of facial motor neurons from rhombomere 4 to rhombomere 6 during embryonic development. Regulates mitochondrial iron transport via interaction. This Gallus gallus (Chicken) protein is Neuropilin-1 (NRP1).